A 64-amino-acid chain; its full sequence is Lingual antimicrobial peptide (64 aa).

A signal peptide spans 1-24; the sequence is MRLHHLLLALLFLVLSAGSGFTQG. 3 cysteine pairs are disulfide-bonded: Cys-31–Cys-60, Cys-38–Cys-53, and Cys-43–Cys-61.

Belongs to the beta-defensin family. LAP/TAP subfamily. In many of the exposed epithelial surfaces including conjunctivae, bronchi, colon, urinary tract and trachea.

It localises to the secreted. Shows a broad spectrum of antibacterial and antifungal activities. The polypeptide is Lingual antimicrobial peptide (LAP) (Bos taurus (Bovine)).